Consider the following 639-residue polypeptide: Chaperone protein DnaK (639 aa).

Phosphothreonine; by autocatalysis is present on Thr-196. The tract at residues 592–639 (ASSLYQTPDAGAPGASGPSAGGEPETGKKGGDGEVQNAEYEVIDGNDK) is disordered. Over residues 601-613 (AGAPGASGPSAGG) the composition is skewed to low complexity.

Belongs to the heat shock protein 70 family.

Its function is as follows. Acts as a chaperone. This is Chaperone protein DnaK from Chlorobium limicola (strain DSM 245 / NBRC 103803 / 6330).